Here is a 977-residue protein sequence, read N- to C-terminus: P3N-PIPO polyprotein (977 aa).

The 143-residue stretch at 132-274 (TCSSSGLDNL…QSITLRATHF (143 aa)) folds into the Peptidase S30 domain. Catalysis depends on for P1 proteinase activity residues His-183, Asp-192, and Ser-225. Positions 325 to 328 (KITC) match the Involved in interaction with stylet and aphid transmission motif. The Involved in virions binding and aphid transmission signature appears at 583–585 (PTK). Positions 609 to 731 (MYIAKEGYCY…ESPMAQYKVG (123 aa)) constitute a Peptidase C6 domain. Catalysis depends on for helper component proteinase activity residues Cys-617 and His-690.

This sequence belongs to the potyviridae P3N-PIPO polyprotein family. As to quaternary structure, interacts (via PIPO domain) with host PCaP1 protein; this interaction may help to anchor the movement complex to the plasma membrane from which the complex could move to the plasmodesmata. Potyviral RNA is expressed as two polyproteins which undergo post-translational proteolytic processing. Genome polyprotein is processed by NIa-pro, P1 and HC-pro proteinases resulting in the production of at least ten individual proteins. P3N-PIPO is cleaved by P1 and HC-pro proteinases resulting in the production of three individual proteins. The P1 proteinase and the HC-pro cleave only their respective C-termini autocatalytically.

Its subcellular location is the host cell junction. The protein localises to the host plasmodesma. It catalyses the reaction Hydrolyzes a Gly-|-Gly bond at its own C-terminus, commonly in the sequence -Tyr-Xaa-Val-Gly-|-Gly, in the processing of the potyviral polyprotein.. Required for aphid transmission and also has proteolytic activity. Only cleaves a Gly-Gly dipeptide at its own C-terminus. Interacts with virions and aphid stylets. Acts as a suppressor of RNA-mediated gene silencing, also known as post-transcriptional gene silencing (PTGS), a mechanism of plant viral defense that limits the accumulation of viral RNAs. May have RNA-binding activity. Its function is as follows. Allows efficient cell to cell propagation, by bypassing the host cell wall barrier. Transports viral genome to neighboring plant cells directly through plasmosdesmata, without any budding. The chain is P3N-PIPO polyprotein from Nicotiana tabacum (Common tobacco).